A 273-amino-acid polypeptide reads, in one-letter code: Bis(5'-nucleosyl)-tetraphosphatase, symmetrical (273 aa).

This sequence belongs to the Ap4A hydrolase family.

The enzyme catalyses P(1),P(4)-bis(5'-adenosyl) tetraphosphate + H2O = 2 ADP + 2 H(+). Functionally, hydrolyzes diadenosine 5',5'''-P1,P4-tetraphosphate to yield ADP. This Aeromonas salmonicida (strain A449) protein is Bis(5'-nucleosyl)-tetraphosphatase, symmetrical.